We begin with the raw amino-acid sequence, 431 residues long: Galactose-3-O-sulfotransferase 3 (431 aa).

At 1–19 the chain is on the cytoplasmic side; it reads MPPILQRLQQSTKMMSHRK. The helical; Signal-anchor for type II membrane protein transmembrane segment at 20–40 threads the bilayer; sequence ILLLVLGCSTVSLLIHQGSQL. Over 41–431 the chain is Lumenal; the sequence is SWYPKLFPLS…RALPRIPQGT (391 aa). N-linked (GlcNAc...) asparagine glycans are attached at residues Asn91, Asn110, Asn177, and Asn302. Positions 400–431 are disordered; the sequence is KRRGGVRSRPESVLDNPPPRPIRALPRIPQGT. Low complexity predominate over residues 421–431; it reads IRALPRIPQGT.

The protein belongs to the galactose-3-O-sulfotransferase family. Requires Mg(2+) as cofactor.

Its subcellular location is the golgi apparatus. The protein localises to the golgi stack membrane. Its pathway is protein modification; carbohydrate sulfation. Functionally, transfers a sulfate to position 3 of non-reducing beta-galactosyl residues in N-glycans and core2-branched O-glycans. Has high activity towards Gal-beta-1,4-GlcNAc, Gal-beta-1,4(Fuc-alpha-1,3)GlcNAc and lower activity towards Gal-beta-1,3(Fuc-alpha-1,4)GlcNAc. The protein is Galactose-3-O-sulfotransferase 3 (Gal3st3) of Mus musculus (Mouse).